The chain runs to 557 residues: IgE-binding protein (557 aa).

The disordered stretch occupies residues 113–172 (DGLGKPALSSSEAGEESSSEETDWEEEAAHYQPANWSRKKPKAAGEGQFADWPQGSRLQG). A compositionally biased stretch (acidic residues) spans 125–138 (AGEESSSEETDWEE). The Integrase catalytic domain maps to 344–534 (TAIRPGRRSR…TAAERHVQSQ (191 aa)).

The protein is IgE-binding protein (Iap) of Mus musculus (Mouse).